Here is a 214-residue protein sequence, read N- to C-terminus: Cytochrome b (214 aa).

4 helical membrane passes run Phe31–Ile51, Trp75–Ile96, Trp111–Leu131, and Phe176–Leu196. 2 residues coordinate heme b: His81 and His95. Positions 180 and 194 each coordinate heme b. His199 is an a ubiquinone binding site.

The protein belongs to the cytochrome b family. The cytochrome bc1 complex contains 3 respiratory subunits (MT-CYB, CYC1 and UQCRFS1), 2 core proteins (UQCRC1 and UQCRC2) and probably 6 low-molecular weight proteins. Requires heme b as cofactor.

It localises to the mitochondrion inner membrane. Its function is as follows. Component of the ubiquinol-cytochrome c reductase complex (complex III or cytochrome b-c1 complex) that is part of the mitochondrial respiratory chain. The b-c1 complex mediates electron transfer from ubiquinol to cytochrome c. Contributes to the generation of a proton gradient across the mitochondrial membrane that is then used for ATP synthesis. The chain is Cytochrome b (MT-CYB) from Lachesis muta muta (Bushmaster).